Here is a 157-residue protein sequence, read N- to C-terminus: MFDVLMYLFETYIHNEPEMRVDQDQLTDDLAQAGFHRDDIYNALNWLEKLADLQEGENAPYFMDADPLAMRIYTEEEGVRLDASCRGFLLFLEQIQVLNLETREMVIDRVMALDNTEFDLEDLKWVVLMVLFNIPGYESAYQQMEELLFEVNEGYLH.

The protein belongs to the Smg family.

This Serratia proteamaculans (strain 568) protein is Protein Smg.